Reading from the N-terminus, the 115-residue chain is Peptidyl-tRNA hydrolase (115 aa).

This sequence belongs to the PTH2 family.

The protein resides in the cytoplasm. It catalyses the reaction an N-acyl-L-alpha-aminoacyl-tRNA + H2O = an N-acyl-L-amino acid + a tRNA + H(+). In terms of biological role, the natural substrate for this enzyme may be peptidyl-tRNAs which drop off the ribosome during protein synthesis. In Methanosarcina acetivorans (strain ATCC 35395 / DSM 2834 / JCM 12185 / C2A), this protein is Peptidyl-tRNA hydrolase.